Reading from the N-terminus, the 162-residue chain is Cyclic pyranopterin monophosphate synthase (162 aa).

Residues 75–77 (LCH) and 113–114 (ME) contribute to the substrate site. Asp-128 is a catalytic residue.

The protein belongs to the MoaC family. As to quaternary structure, homohexamer; trimer of dimers.

It carries out the reaction (8S)-3',8-cyclo-7,8-dihydroguanosine 5'-triphosphate = cyclic pyranopterin phosphate + diphosphate. Its pathway is cofactor biosynthesis; molybdopterin biosynthesis. Its function is as follows. Catalyzes the conversion of (8S)-3',8-cyclo-7,8-dihydroguanosine 5'-triphosphate to cyclic pyranopterin monophosphate (cPMP). The polypeptide is Cyclic pyranopterin monophosphate synthase (Klebsiella pneumoniae (strain 342)).